Reading from the N-terminus, the 710-residue chain is Dual specificity protein kinase shkE (710 aa).

Composition is skewed to low complexity over residues 83–94 (DVSDSNNNNSTS), 107–129 (NNNNNNNNNNNNNNNNNNNNNNN), and 197–208 (QKQQQSQASIQQ). 2 disordered regions span residues 83-136 (DVSD…PTVI) and 189-232 (QHLT…IPPE). Residues 237–495 (DVKTDLLGGG…EVTQRMNEVL (259 aa)) enclose the Protein kinase domain. ATP contacts are provided by residues 243–251 (LGGGAYGKV) and K264. The active-site Proton acceptor is the D359. The 111-residue stretch at 597–707 (WFHFDISRDI…CPITEIKVPY (111 aa)) folds into the SH2 domain.

The protein belongs to the protein kinase superfamily. Ser/Thr protein kinase family. SH2 domain-containing protein kinase subfamily.

The protein resides in the membrane. The catalysed reaction is L-seryl-[protein] + ATP = O-phospho-L-seryl-[protein] + ADP + H(+). The enzyme catalyses L-threonyl-[protein] + ATP = O-phospho-L-threonyl-[protein] + ADP + H(+). Its function is as follows. Required for proper chemotaxis and phagocytosis; proper spatiotemporal control of F-actin levels in chemotaxing cells. Negative regulator of the PI3K (phosphatidylinositol 3 kinase) pathway. Predominantly phosphorylates serines and threonines and tyrosines at a lower level. In Dictyostelium discoideum (Social amoeba), this protein is Dual specificity protein kinase shkE (shkE).